The primary structure comprises 199 residues: Recombination protein RecR (199 aa).

Residues 58 to 73 form a C4-type zinc finger; it reads CSVCYNLSETELCRIC. A Toprim domain is found at 81–176; the sequence is TRLCVVEQPR…EITRLARGIT (96 aa).

Belongs to the RecR family.

Functionally, may play a role in DNA repair. It seems to be involved in an RecBC-independent recombinational process of DNA repair. It may act with RecF and RecO. The protein is Recombination protein RecR of Rhodopirellula baltica (strain DSM 10527 / NCIMB 13988 / SH1).